Consider the following 205-residue polypeptide: Large ribosomal subunit protein bL17c (205 aa).

The N-terminal 89 residues, 1-89, are a transit peptide targeting the chloroplast; that stretch reads MASASTTWSM…VIDNGGRVFA (89 aa).

The protein belongs to the bacterial ribosomal protein bL17 family. As to quaternary structure, part of the 50S ribosomal subunit.

It is found in the plastid. The protein resides in the chloroplast. Its function is as follows. This protein binds directly to 23S ribosomal RNA. The chain is Large ribosomal subunit protein bL17c (RPL17) from Nicotiana tabacum (Common tobacco).